A 323-amino-acid polypeptide reads, in one-letter code: MWVLGIDTSCDDTGVGLVRDGKVVVNLVASQVRLHEAFGGVVPELASREHLKALPLLVERALAEAGLRPKDLDLVAATRGPGLIGALLVGYTFAKGMAFALDRPFYAVHHLEGHIAAAWPEGLPPPFLALVASGGHTHLYEVLDLGRYRLLGATRDDAAGEAFDKVARLLGLGFPGGPEVERLAEEAEEAIPFPVPLRGQEGYDFSFSGLKTKALHLVEKGLPKAALAKGFQEAAIAHLAEVVLKAAKDTGHRVLLVAGGVAANRALQERFKEAGLEVHFPPRGLSQDNGAMIALAAWRRHQRGFPPSPLSLGATAYWPLEEA.

Positions 110 and 114 each coordinate Fe cation. Substrate contacts are provided by residues 131 to 135 (VASGG), Asp-164, Gly-177, and Asn-264. Asp-288 contributes to the Fe cation binding site.

This sequence belongs to the KAE1 / TsaD family. The cofactor is Fe(2+).

Its subcellular location is the cytoplasm. The enzyme catalyses L-threonylcarbamoyladenylate + adenosine(37) in tRNA = N(6)-L-threonylcarbamoyladenosine(37) in tRNA + AMP + H(+). Its function is as follows. Required for the formation of a threonylcarbamoyl group on adenosine at position 37 (t(6)A37) in tRNAs that read codons beginning with adenine. Is involved in the transfer of the threonylcarbamoyl moiety of threonylcarbamoyl-AMP (TC-AMP) to the N6 group of A37, together with TsaE and TsaB. TsaD likely plays a direct catalytic role in this reaction. The chain is tRNA N6-adenosine threonylcarbamoyltransferase from Thermus thermophilus (strain ATCC BAA-163 / DSM 7039 / HB27).